The chain runs to 440 residues: Tubby-like F-box protein 13 (440 aa).

In terms of domain architecture, F-box spans 51–106; the sequence is SCWASLPPELLRDIIERLEESEATWPSRKHVVACAGVCRTWREMCKEIVKNPELCG.

The protein belongs to the TUB family. In terms of tissue distribution, ubiquitous.

In Oryza sativa subsp. japonica (Rice), this protein is Tubby-like F-box protein 13 (TULP13).